We begin with the raw amino-acid sequence, 174 residues long: Large ribosomal subunit protein uL10 (174 aa).

This sequence belongs to the universal ribosomal protein uL10 family. As to quaternary structure, part of the ribosomal stalk of the 50S ribosomal subunit. The N-terminus interacts with L11 and the large rRNA to form the base of the stalk. The C-terminus forms an elongated spine to which L12 dimers bind in a sequential fashion forming a multimeric L10(L12)X complex.

In terms of biological role, forms part of the ribosomal stalk, playing a central role in the interaction of the ribosome with GTP-bound translation factors. The sequence is that of Large ribosomal subunit protein uL10 from Methylibium petroleiphilum (strain ATCC BAA-1232 / LMG 22953 / PM1).